Consider the following 314-residue polypeptide: 3'-5' exoribonuclease YhaM (314 aa).

The region spanning 163–279 (HVVSMLDLAK…LHYIDNLDAK (117 aa)) is the HD domain.

The protein belongs to the YhaM family.

Its function is as follows. Shows a 3'-5' exoribonuclease activity. This is 3'-5' exoribonuclease YhaM from Bacillus thuringiensis (strain Al Hakam).